The sequence spans 1556 residues: uncharacterized protein (1556 aa).

Serine 2 bears the N-acetylserine mark. The span at asparagine 145–lysine 156 shows a compositional bias: basic and acidic residues. A disordered region spans residues asparagine 145–aspartate 170. Positions serine 378–proline 583 constitute a Helicase ATP-binding domain. ATP is bound at residue glutamate 391–threonine 398. Serine 810 carries the phosphoserine modification. The disordered stretch occupies residues serine 810 to methionine 850. Composition is skewed to basic and acidic residues over residues methionine 817–serine 827 and arginine 834–asparagine 846. The RING-type zinc-finger motif lies at cysteine 1239–lysine 1277. Over residues arginine 1297–alanine 1309 the composition is skewed to basic and acidic residues. Disordered stretches follow at residues arginine 1297–asparagine 1319 and glutamate 1508–glutamate 1534. A compositionally biased stretch (low complexity) spans aspartate 1310–asparagine 1319. The Helicase C-terminal domain occupies lysine 1363–alanine 1531. The span at glutamate 1508–glutamate 1518 shows a compositional bias: basic and acidic residues. The segment covering alanine 1519–aspartate 1529 has biased composition (acidic residues).

This sequence belongs to the SNF2/RAD54 helicase family.

It is found in the nucleus. Functionally, is probably involved in a pathway contributing to genomic integrity. This is an uncharacterized protein from Saccharomyces cerevisiae (strain ATCC 204508 / S288c) (Baker's yeast).